A 315-amino-acid polypeptide reads, in one-letter code: Ribosomal RNA small subunit methyltransferase H (315 aa).

Residues glycine 37–histidine 39, aspartate 57, phenylalanine 83, aspartate 105, and glutamine 112 each bind S-adenosyl-L-methionine.

It belongs to the methyltransferase superfamily. RsmH family.

The protein resides in the cytoplasm. It catalyses the reaction cytidine(1402) in 16S rRNA + S-adenosyl-L-methionine = N(4)-methylcytidine(1402) in 16S rRNA + S-adenosyl-L-homocysteine + H(+). Its function is as follows. Specifically methylates the N4 position of cytidine in position 1402 (C1402) of 16S rRNA. This Pseudomonas putida (strain ATCC 47054 / DSM 6125 / CFBP 8728 / NCIMB 11950 / KT2440) protein is Ribosomal RNA small subunit methyltransferase H.